Consider the following 304-residue polypeptide: Acetaldehyde dehydrogenase 4 (304 aa).

Cys-131 acts as the Acyl-thioester intermediate in catalysis. NAD(+) is bound by residues 162-170 and Asn-273; that span reads SAGPGTRKN.

This sequence belongs to the acetaldehyde dehydrogenase family.

It catalyses the reaction acetaldehyde + NAD(+) + CoA = acetyl-CoA + NADH + H(+). This chain is Acetaldehyde dehydrogenase 4, found in Dechloromonas aromatica (strain RCB).